Consider the following 166-residue polypeptide: Lipoprotein signal peptidase (166 aa).

The next 4 membrane-spanning stretches (helical) occupy residues 9-29 (AGGSLAPWLGVAVIVILFDQL), 37-57 (VFAYGSSHAIAPFFNLVLVYN), 71-91 (WQRWAFTALGVAAAVLICYLL), and 100-120 (FCTALALIMGGAIGNVIDRLL). Residues aspartate 126 and aspartate 144 contribute to the active site. The helical transmembrane segment at 136 to 156 (HWPAFNLADSAITIGAALLVF) threads the bilayer.

Belongs to the peptidase A8 family.

The protein resides in the cell inner membrane. It catalyses the reaction Release of signal peptides from bacterial membrane prolipoproteins. Hydrolyzes -Xaa-Yaa-Zaa-|-(S,diacylglyceryl)Cys-, in which Xaa is hydrophobic (preferably Leu), and Yaa (Ala or Ser) and Zaa (Gly or Ala) have small, neutral side chains.. The protein operates within protein modification; lipoprotein biosynthesis (signal peptide cleavage). This protein specifically catalyzes the removal of signal peptides from prolipoproteins. The sequence is that of Lipoprotein signal peptidase from Paraburkholderia phymatum (strain DSM 17167 / CIP 108236 / LMG 21445 / STM815) (Burkholderia phymatum).